The primary structure comprises 1025 residues: Multidrug resistance protein MdtC (1025 aa).

A run of 12 helical transmembrane segments spans residues 3-23, 333-353, 360-380, 387-407, 431-451, 463-483, 528-548, 853-873, 875-895, 897-917, 953-973, and 984-1004; these read FFAL…AITL, EVEQ…FLFL, IIPA…MYLC, LSLM…IVVL, VGFT…PLLL, FAVT…TLTP, LVGV…ISIP, VILI…LYES, VHPL…LLAL, LFNA…IGIV, PIMM…LSGG, and ITIV…TPVV.

This sequence belongs to the resistance-nodulation-cell division (RND) (TC 2.A.6) family. MdtC subfamily. Part of a tripartite efflux system composed of MdtA, MdtB and MdtC. MdtC forms a heteromultimer with MdtB.

Its subcellular location is the cell inner membrane. Its function is as follows. The MdtABC tripartite complex confers resistance against novobiocin and deoxycholate. The chain is Multidrug resistance protein MdtC from Escherichia fergusonii (strain ATCC 35469 / DSM 13698 / CCUG 18766 / IAM 14443 / JCM 21226 / LMG 7866 / NBRC 102419 / NCTC 12128 / CDC 0568-73).